The chain runs to 185 residues: Large ribosomal subunit protein bL25 (185 aa).

The protein belongs to the bacterial ribosomal protein bL25 family. CTC subfamily. In terms of assembly, part of the 50S ribosomal subunit; part of the 5S rRNA/L5/L18/L25 subcomplex. Contacts the 5S rRNA. Binds to the 5S rRNA independently of L5 and L18.

This is one of the proteins that binds to the 5S RNA in the ribosome where it forms part of the central protuberance. This Chlamydia trachomatis serovar L2 (strain ATCC VR-902B / DSM 19102 / 434/Bu) protein is Large ribosomal subunit protein bL25.